Consider the following 171-residue polypeptide: Large ribosomal subunit protein uL10 (171 aa).

This sequence belongs to the universal ribosomal protein uL10 family. In terms of assembly, part of the ribosomal stalk of the 50S ribosomal subunit. The N-terminus interacts with L11 and the large rRNA to form the base of the stalk. The C-terminus forms an elongated spine to which L12 dimers bind in a sequential fashion forming a multimeric L10(L12)X complex.

Forms part of the ribosomal stalk, playing a central role in the interaction of the ribosome with GTP-bound translation factors. The polypeptide is Large ribosomal subunit protein uL10 (Phenylobacterium zucineum (strain HLK1)).